The sequence spans 248 residues: Metallo-beta-lactamase type 2 (248 aa).

Residues 1-21 (MKRLKGLLVLALGFTGLQVFG) form the signal peptide. The Zn(2+) site is built by histidine 97, histidine 99, aspartate 101, histidine 160, and cysteine 179. Lysine 182 serves as a coordination point for substrate. Histidine 221 contributes to the Zn(2+) binding site.

The protein belongs to the metallo-beta-lactamase superfamily. Class-B beta-lactamase family. As to quaternary structure, monomer. It depends on Zn(2+) as a cofactor.

It localises to the periplasm. It carries out the reaction a beta-lactam + H2O = a substituted beta-amino acid. In terms of biological role, confers resistance to the different beta-lactams antibiotics (penicillin, cephalosporin and carbapenem) via the hydrolysis of the beta-lactam ring. The chain is Metallo-beta-lactamase type 2 (blaB6) from Elizabethkingia meningoseptica (Chryseobacterium meningosepticum).